The following is a 783-amino-acid chain: MEEELKCPVCGSLFREPIILPCSHNVCLPCARTIAVQTPDGEQHLPQPLLLSRGSGLQAGAAAAASLEHDAAAGPACGGAGGSAAGGLGGGAGGGGDHADKLSLYSETDSGYGSYTPSLKSPNGVRVLPMVPAPPGSSAAAARGAACSSLSSSSSSITCPQCHRSASLDHRGLRGFQRNRLLEAIVQRYQQGRGAVPGTSAAAAVAICQLCDRTPPEPAATLCEQCDVLYCSACQLKCHPSRGPFAKHRLVQPPPPPPPPAEAASGPTGTAQGAPSGGGGCKSPGGAGAGATGGSTARKFPTCPEHEMENYSMYCVSCRTPVCYLCLEEGRHAKHEVKPLGAMWKQHKAQLSQALNGVSDKAKEAKEFLVQLKNILQQIQENGLDYEACLVAQCDALVDALTRQKAKLLTKVTKEREHKLKMVWDQINHCTLKLRQSTGLMEYCLEVIKENDPSGFLQISDALIKRVQVSQEQWVKGALEPKVSAEFDLTLDSEPLLQAIHQLDFIQMKCRVPPVPLLQLEKCCTRNNSVTLAWRMPPFTHSPVDGYILELDDGAGGQFREVYVGKETLCTIDGLHFNSTYNARVKAFNSSGVGPYSKTVVLQTSDVAWFTFDPNSGHRDIILSNDNQTATCSSYDDRVVLGTAAFSKGVHYWELHVDRYDNHPDPAFGVARASVVKDMMLGKDDKAWAMYVDNNRSWFMHCNSHTNRTEGGVCKGATVGVLLDLNKHTLTFFINGQQQGPTAFSHVDGVFMPALSLNRNVQVTLHTGLEVPTNLGRPKLSGN.

The segment at 7–42 (CPVCGSLFREPIILPCSHNVCLPCARTIAVQTPDGE) adopts an RING-type; degenerate zinc-finger fold. A B box-type 1; degenerate zinc finger spans residues 206–253 (AICQLCDRTPPEPAATLCEQCDVLYCSACQLKCHPSRGPFAKHRLVQP). Positions 247 to 295 (KHRLVQPPPPPPPPAEAASGPTGTAQGAPSGGGGCKSPGGAGAGATGGS) are disordered. Residues 252–261 (QPPPPPPPPA) are compositionally biased toward pro residues. The span at 275–293 (PSGGGGCKSPGGAGAGATG) shows a compositional bias: gly residues. Residues 298 to 340 (RKFPTCPEHEMENYSMYCVSCRTPVCYLCLEEGRHAKHEVKPL) form a B box-type 2 zinc finger. Cysteine 303, histidine 306, cysteine 326, and histidine 332 together coordinate Zn(2+). A coiled-coil region spans residues 345–382 (KQHKAQLSQALNGVSDKAKEAKEFLVQLKNILQQIQEN). A COS domain is found at 448-506 (IKENDPSGFLQISDALIKRVQVSQEQWVKGALEPKVSAEFDLTLDSEPLLQAIHQLDFI). In terms of domain architecture, Fibronectin type-III spans 513–607 (PPVPLLQLEK…KTVVLQTSDV (95 aa)). Residues 589-780 (NSSGVGPYSK…VPTNLGRPKL (192 aa)) form the B30.2/SPRY domain.

This sequence belongs to the TRIM/RBCC family.

The protein localises to the cytoplasm. The protein resides in the cytoskeleton. This chain is Tripartite motif-containing protein 67 (TRIM67), found in Homo sapiens (Human).